A 69-amino-acid chain; its full sequence is MSSSVSEECTPAKKKYDACFNDWYANKFLKGDLHNRDCDELFAEYKSCLLKALKTKKIDPLLEAARKED.

Residues 6–56 (SEECTPAKKKYDACFNDWYANKFLKGDLHNRDCDELFAEYKSCLLKALKTK) enclose the CHCH domain. 2 consecutive short sequence motifs (cx9C motif) follow at residues 9–19 (CTPAKKKYDAC) and 38–48 (CDELFAEYKSC). Cystine bridges form between Cys-9/Cys-48 and Cys-19/Cys-38.

This sequence belongs to the TRIAP1/MDM35 family.

This is an uncharacterized protein from Schizosaccharomyces pombe (strain 972 / ATCC 24843) (Fission yeast).